A 259-amino-acid chain; its full sequence is Small ribosomal subunit protein uS2 (259 aa).

A disordered region spans residues 234-259 (VAEDSEEVSTVDADAITAEDFETEEV). Residues 250 to 259 (TAEDFETEEV) show a composition bias toward acidic residues.

The protein belongs to the universal ribosomal protein uS2 family.

This is Small ribosomal subunit protein uS2 from Sulfurimonas denitrificans (strain ATCC 33889 / DSM 1251) (Thiomicrospira denitrificans (strain ATCC 33889 / DSM 1251)).